We begin with the raw amino-acid sequence, 428 residues long: MGLNTAIATRVNGTPPPEVPIAGIELGSLDFWALDDDVRDGAFATLRREAPISFWPTIELPGFVAGNGHWALTKNDDVFYASRHPDIFSSYPNITINDQTPELAEYFGSMIVLDDPRHQRLRSIVSRAFTPKVVARIEAAVRDRAHRLVSSMIANNPDRQADLVSELAGPLPLQIICDMMGIPKADHQRIFHWTNVILGFGDPDLATDFDEFMQVSADIGAYATALAEDRRVNHHDDLTSSLVEAEVDGERLSSREIASFFILLVVAGNETTRNAITHGVLALSRYPEQRDRWWSDFDGLAPTAVEEIVRWASPVVYMRRTLTQDIELRGTKMAAGDKVSLWYCSANRDESKFADPWTFDLARNPNPHLGFGGGGAHFCLGANLARREIRVAFDELRRQMPDVVATEEPARLLSQFIHGIKTLPVTWS.

Cys-379 contacts heme.

This sequence belongs to the cytochrome P450 family. It depends on heme as a cofactor.

The catalysed reaction is a methyl-branched lipid + O2 + 2 reduced ferredoxin [iron-sulfur] cluster + 2 H(+) = an omega-hydroxy-methyl-branched lipid + H2O + 2 oxidized ferredoxin [iron-sulfur] cluster.. The enzyme catalyses cholest-4-en-3-one + 6 reduced [2Fe-2S]-[ferredoxin] + 3 O2 + 5 H(+) = (25R)-3-oxocholest-4-en-26-oate + 6 oxidized [2Fe-2S]-[ferredoxin] + 4 H2O. The protein operates within lipid metabolism; branched-chain fatty acid metabolism. Primarily hydroxylates the omega-carbon of a number of methyl-branched lipids, including (2E,6E)-farnesol, phytanate, geranylgeraniol, 15-methylpalmitate and (2E,6E)-farnesyl diphosphate. Also catalyzes the sequential oxidation of the terminal methyl of cholest-4-en-3-one into (25R)-26-hydroxycholest-4-en-3-one (alcohol), (25R)-26-oxocholest-4-en-3-one (aldehyde), to finally yield the carboxylic acid (25R)-3-oxocholest-4-en-26-oate. Also able to sequentially oxidize cholesterol itself, not only cholest-4-en-3-one. The protein is Methyl-branched lipid omega-hydroxylase (cyp124) of Mycobacterium tuberculosis (strain CDC 1551 / Oshkosh).